A 155-amino-acid polypeptide reads, in one-letter code: Ribosome maturation factor RimP (155 aa).

This sequence belongs to the RimP family.

It is found in the cytoplasm. Its function is as follows. Required for maturation of 30S ribosomal subunits. The protein is Ribosome maturation factor RimP of Synechococcus sp. (strain WH7803).